Here is a 140-residue protein sequence, read N- to C-terminus: 6,7-dimethyl-8-ribityllumazine synthase (140 aa).

5-amino-6-(D-ribitylamino)uracil is bound by residues F11, 43–45, and 67–69; these read SFD and CVI. 72–73 serves as a coordination point for (2S)-2-hydroxy-3-oxobutyl phosphate; that stretch reads DT. H75 acts as the Proton donor in catalysis. 5-amino-6-(D-ribitylamino)uracil is bound at residue L100. (2S)-2-hydroxy-3-oxobutyl phosphate is bound at residue R115.

It belongs to the DMRL synthase family. As to quaternary structure, forms an icosahedral capsid composed of 60 subunits, arranged as a dodecamer of pentamers.

The enzyme catalyses (2S)-2-hydroxy-3-oxobutyl phosphate + 5-amino-6-(D-ribitylamino)uracil = 6,7-dimethyl-8-(1-D-ribityl)lumazine + phosphate + 2 H2O + H(+). It participates in cofactor biosynthesis; riboflavin biosynthesis; riboflavin from 2-hydroxy-3-oxobutyl phosphate and 5-amino-6-(D-ribitylamino)uracil: step 1/2. In terms of biological role, catalyzes the formation of 6,7-dimethyl-8-ribityllumazine by condensation of 5-amino-6-(D-ribitylamino)uracil with 3,4-dihydroxy-2-butanone 4-phosphate. This is the penultimate step in the biosynthesis of riboflavin. This is 6,7-dimethyl-8-ribityllumazine synthase from Methanococcus vannielii (strain ATCC 35089 / DSM 1224 / JCM 13029 / OCM 148 / SB).